The following is a 1777-amino-acid chain: MDNSMMDSTLRRILFFSNEFPSDDLKDLFRRLDQHSKDRRFRLLSIFLEESTAILKDEVSKLPRPLKELVPPFNSVLSLVDVDFRQGPLGAAMESSMLTILELGLFIGHYESEDTEWDLVPGQSVLAGLSIGILAAAAVALSSSLADVAKTGAEAVRVSFRLGVYVADISTKLEAPQSDGTLSSWAHVVTEMTEASVQDELKQFNTGTHSPELTKVFVSAADKTSVSVSGPPSRIKAAFQHSPVLRYSKSLPLPVYDGLCHASHLYTRSDIDSIINSSESVILPDRSVRLALLSSQTGKPFVAKTASDLFLEIGTELLTGTIYLDNVTAGIVQHLQPQSKETSSCQIDSFRTSLVLRGIHSAVEAELSRDRQLTRRDLVSWISRDFGPRRPRSQASSKLAIVGMACRLPGGANDLDLFWKLLEEGRDTLTTVPPDRFDLNTHYDPTGKTENATQTPYGNFIDRPGFFDAGFFNMSPREAEQTDPMQRLALVTAYEALEMAGVVPGRTPSTHPSRIGTFYGQASDDWRELNASQNISTYAVPGGERSFGNGRINYFFKFSGPSFNLDTACSSGLAAVQAACSALWAGEVDTAIAGGLNVITDPDNYCGLGNAHFLSKTGQCKVWDKDADGYCRADGIGSVVIKRLEDAEADNDNILAVVLGASTNHSAEAISITHPHAGAQKANYRQVLNQAGVNPIDVSYIELHGTGTQAGDAVESESVSDIFAPVTPRRRPDQRLYLGAVKSNIGHGEAAAGIASLLKALLVYQKNLIPMHIGIKSEINPTIPKDLERRNVGLAMQNTPWPRPAGKKRLAVVNSFGAHGGNTTLLLEDAPERVKIQGTEDRITHSILLSAKSKTSLQANMESLLSYLDQHPETSLADLAYTTSSRRMHHNMRFGTLVSSISGLQKMLRSQLDNPNFASEIRPVPNEAPSVILAFTGQGAYYHGMGSELFAEFPYFRAQVQQLDRLAQRLGFPSVVPPWRRFWSLLGVSISAVIGHSLGEYAALAVAGVISAADAIYLVGRRAQLVEERCAQASHSMLSVRASEDAIQEMLAVELETASITYEVSCCNTNQDTVIGGPKGEINDIRRALEAKSIKCTILDVPYAFHTAQMNPILDDLETLAKAVPFKAPSIPVISPLLATVIYDVKSLDANYLRRATRETVDFAAAIEAAQDMGLVDSKTIWIDVGPHPICAGLVRSMIPSASAIPSCRRNEDSIATISKGLVTLYLAGLTPSWVEFFKPREREYSLLYLPKYRWNETDYWIPYIGTWTLDKAHLKHGTKPKTPFSGSMSRPSALRTSLVHQITAETVEATTATLHTISDMQHPDFLEAIHGHTMNKCGVATSSIWSDMAFTVGEYLYRRLVPNTKDVHMNLTDVEVLHAQVASKTKGSVQPLVLRAHLDLSTNSMSLAWFNADGETGECAAESFATATIRFEDPEAWRKDWARLAHLVRGRIEVLEQRATEGKASRLSKPLAYALFKNVVDYADRYRGMDSVVLDELEAMAEVTLVPERYGTWHTPPHWIDSVSHLAGLVMNGSDASNTRDYFFVTPGCDSFRLLKKLEPGARYRSYVRMFPLPEDPNMHSGDVYILQGEEIVGMVGMIRFRRVPRLLMDRFFSPPTTTSVAVPVPPLTGATMKCKDITQTAPALPTPAPPIVVSSPVVSSTMACNIPEPAPLLATSSKSSTPKESPIVTPAESERAEPVDNSMTSQCLRLMARETGLEVEALTADASFVQLGVDSLMSLVLSEKFRAELGVEIKSSLFLECPTIGEMTAWIEEYC.

An N-terminal acylcarrier protein transacylase domain (SAT) region spans residues 27-261 (DLFRRLDQHS…PLPVYDGLCH (235 aa)). One can recognise a Ketosynthase family 3 (KS3) domain in the interval 396–829 (SSKLAIVGMA…GGNTTLLLED (434 aa)). Residues Cys-569, His-704, and His-747 each act as for beta-ketoacyl synthase activity in the active site. The malonyl-CoA:ACP transacylase (MAT) domain stretch occupies residues 934–1212 (AFTGQGAYYH…SAIPSCRRNE (279 aa)). The segment at 1297–1616 (TSLVHQITAE…RLLMDRFFSP (320 aa)) is product template (PT) domain. The tract at residues 1301-1437 (HQITAETVEA…ATIRFEDPEA (137 aa)) is N-terminal hotdog fold. One can recognise a PKS/mFAS DH domain in the interval 1301–1611 (HQITAETVEA…FRRVPRLLMD (311 aa)). The active-site Proton acceptor; for dehydratase activity is the His-1333. The C-terminal hotdog fold stretch occupies residues 1465 to 1611 (ASRLSKPLAY…FRRVPRLLMD (147 aa)). Residue Asp-1522 is the Proton donor; for dehydratase activity of the active site. Residues 1674–1704 (LLATSSKSSTPKESPIVTPAESERAEPVDNS) are disordered. Positions 1677–1688 (TSSKSSTPKESP) are enriched in low complexity. Residues 1700-1777 (PVDNSMTSQC…EMTAWIEEYC (78 aa)) enclose the Carrier domain. Residue Ser-1737 is modified to O-(pantetheine 4'-phosphoryl)serine.

Pantetheine 4'-phosphate serves as cofactor.

Its pathway is secondary metabolite biosynthesis. In terms of biological role, non-reducing polyketide synthase; part of the gene cluster that mediates the biosynthesis of neosartoricin B, a prenylated anthracenone that probably exhibits T-cell antiproliferative activity, suggestive of a physiological role as an immunosuppressive agent. The non-reducing polyketide synthase nscA probably synthesizes and cyclizes the decaketide backbone. The hydrolase nscB then mediates the product release through hydrolysis followed by spontaneous decarboxylation. The prenyltransferase nscD catalyzes the addition of the dimethylallyl group to the aromatic C5. The FAD-dependent monooxygenase nscC is then responsible for the stereospecific hydroxylation at C2. Neosartoricin B can be converted into two additional compounds neosartoricins C and D. Neosartoricin C is a spirocyclic compound that is cyclized through the attack of C3 hydroxyl on C14, followed by dehydration. On the other hand, neosartoricin D is a further cyclized compound in which attack of C2 on C14 in neosartoricin C results in the formation of the acetal-containing dioxabicyclo-octanone ring. Both of these compounds are novel and possibly represent related metabolites of the gene cluster. The protein is Non-reducing polyketide synthase nscA of Trichophyton equinum (strain ATCC MYA-4606 / CBS 127.97) (Horse ringworm fungus).